A 209-amino-acid polypeptide reads, in one-letter code: Uracil phosphoribosyltransferase (209 aa).

Residues arginine 79, arginine 104, and 131-139 contribute to the 5-phospho-alpha-D-ribose 1-diphosphate site; that span reads DPMLATGGS. Uracil is bound by residues valine 194 and 199 to 201; that span reads GDA. Aspartate 200 contributes to the 5-phospho-alpha-D-ribose 1-diphosphate binding site.

The protein belongs to the UPRTase family. Requires Mg(2+) as cofactor.

It carries out the reaction UMP + diphosphate = 5-phospho-alpha-D-ribose 1-diphosphate + uracil. It functions in the pathway pyrimidine metabolism; UMP biosynthesis via salvage pathway; UMP from uracil: step 1/1. With respect to regulation, allosterically activated by GTP. In terms of biological role, catalyzes the conversion of uracil and 5-phospho-alpha-D-ribose 1-diphosphate (PRPP) to UMP and diphosphate. The protein is Uracil phosphoribosyltransferase of Bacillus mycoides (strain KBAB4) (Bacillus weihenstephanensis).